Here is a 417-residue protein sequence, read N- to C-terminus: NADH-quinone oxidoreductase subunit D 2 (417 aa).

It belongs to the complex I 49 kDa subunit family. NDH-1 is composed of 14 different subunits. Subunits NuoB, C, D, E, F, and G constitute the peripheral sector of the complex.

The protein resides in the cell membrane. The enzyme catalyses a quinone + NADH + 5 H(+)(in) = a quinol + NAD(+) + 4 H(+)(out). Its function is as follows. NDH-1 shuttles electrons from NADH, via FMN and iron-sulfur (Fe-S) centers, to quinones in the respiratory chain. The immediate electron acceptor for the enzyme in this species is believed to be ubiquinone. Couples the redox reaction to proton translocation (for every two electrons transferred, four hydrogen ions are translocated across the cytoplasmic membrane), and thus conserves the redox energy in a proton gradient. In Roseiflexus sp. (strain RS-1), this protein is NADH-quinone oxidoreductase subunit D 2.